Reading from the N-terminus, the 310-residue chain is Acetyl-coenzyme A carboxylase carboxyl transferase subunit beta, chloroplastic (310 aa).

Residues 47-310 (LWARCDNCGN…LYLSVPYNKN (264 aa)) form the CoA carboxyltransferase N-terminal domain. 4 residues coordinate Zn(2+): Cys51, Cys54, Cys70, and Cys73. Residues 51-73 (CDNCGNMLYVKFLKQNRSVCEEC) form a C4-type zinc finger.

Belongs to the AccD/PCCB family. In terms of assembly, acetyl-CoA carboxylase is a heterohexamer composed of biotin carboxyl carrier protein, biotin carboxylase and 2 subunits each of ACCase subunit alpha and ACCase plastid-coded subunit beta (accD). Zn(2+) serves as cofactor.

The protein resides in the plastid. It localises to the chloroplast stroma. It catalyses the reaction N(6)-carboxybiotinyl-L-lysyl-[protein] + acetyl-CoA = N(6)-biotinyl-L-lysyl-[protein] + malonyl-CoA. It functions in the pathway lipid metabolism; malonyl-CoA biosynthesis; malonyl-CoA from acetyl-CoA: step 1/1. Functionally, component of the acetyl coenzyme A carboxylase (ACC) complex. Biotin carboxylase (BC) catalyzes the carboxylation of biotin on its carrier protein (BCCP) and then the CO(2) group is transferred by the transcarboxylase to acetyl-CoA to form malonyl-CoA. The chain is Acetyl-coenzyme A carboxylase carboxyl transferase subunit beta, chloroplastic from Adiantum capillus-veneris (Maidenhair fern).